Reading from the N-terminus, the 330-residue chain is Aquaporin Lacbi1:307192 (330 aa).

The Cytoplasmic segment spans residues 1–40 (MSATPIIHLRDVKKRTGVLNAWERVRNKPQVHWAMECFAE). Residues 41-61 (ALGVFFYVYFGLGSTAAWVIG) form a helical membrane-spanning segment. Residues 62–71 (NILKQSGLSS) lie on the Extracellular side of the membrane. A helical transmembrane segment spans residues 72–92 (VFQIGFAYAFGILFAIGVCAA). Residues 93–124 (TSGGHFNPCVTIAFTIFRGFPPLKAVRYIVAQ) lie on the Cytoplasmic side of the membrane. The NPA 1 signature appears at 99-101 (NPC). The chain crosses the membrane as a helical span at residues 125-145 (ILGAYIASALVYNQWKVLIVE). At 146-157 (SELLLKQAGVYE) the chain is on the extracellular side. Residues 158–178 (TTMFTPNGPAGIFALYLLPGA) traverse the membrane as a helical segment. Residues 179 to 183 (QTLPR) lie on the Cytoplasmic side of the membrane. Residues 184-204 (AFLNEFVNCFVLALVIWAALD) traverse the membrane as a helical segment. Topologically, residues 205–207 (PTS) are extracellular. The chain crosses the membrane as a helical span at residues 208–228 (FMIPPVMAPFIIAAAYAGSIW). The Cytoplasmic segment spans residues 229–264 (GYAVPAISLNSARDIGCRLFALTIWGKSAAGGSYSA). An NPA 2 motif is present at residues 238 to 240 (NSA). The helical transmembrane segment at 265–285 (ITALVNIPATLLAAVVYELFL) threads the bilayer. Topologically, residues 286–330 (VDSDRVVAGSHLEFMNVAANHRRHRHQAEDDNHGDADDSSQEKPV) are extracellular. The disordered stretch occupies residues 308 to 330 (RHRHQAEDDNHGDADDSSQEKPV). Positions 312-330 (QAEDDNHGDADDSSQEKPV) are enriched in basic and acidic residues.

This sequence belongs to the MIP/aquaporin (TC 1.A.8) family.

The protein resides in the membrane. In terms of biological role, water channel-like protein that does not show transport of water nor ammonium across membranes. The sequence is that of Aquaporin Lacbi1:307192 from Laccaria bicolor (strain S238N-H82 / ATCC MYA-4686) (Bicoloured deceiver).